A 506-amino-acid polypeptide reads, in one-letter code: Glutamate--tRNA ligase (506 aa).

A 'HIGH' region motif is present at residues 24 to 34; the sequence is PSPTGLQHIGG. Residues Cys121, Cys123, Cys148, and His150 each contribute to the Zn(2+) site. The 'KMSKS' region motif lies at 266–270; that stretch reads KLSKR. Lys269 lines the ATP pocket.

Belongs to the class-I aminoacyl-tRNA synthetase family. Glutamate--tRNA ligase type 1 subfamily. Monomer. Requires Zn(2+) as cofactor.

The protein resides in the cytoplasm. It carries out the reaction tRNA(Glu) + L-glutamate + ATP = L-glutamyl-tRNA(Glu) + AMP + diphosphate. Its function is as follows. Catalyzes the attachment of glutamate to tRNA(Glu) in a two-step reaction: glutamate is first activated by ATP to form Glu-AMP and then transferred to the acceptor end of tRNA(Glu). This chain is Glutamate--tRNA ligase, found in Borrelia recurrentis (strain A1).